The chain runs to 166 residues: Co-chaperone protein HscB homolog (166 aa).

Positions 3–75 (QYFTLFRIEP…IDRAAYLLKT (73 aa)) constitute a J domain.

This sequence belongs to the HscB family. As to quaternary structure, interacts with HscA and stimulates its ATPase activity.

Its function is as follows. Co-chaperone involved in the maturation of iron-sulfur cluster-containing proteins. Seems to help targeting proteins to be folded toward HscA. The chain is Co-chaperone protein HscB homolog from Neisseria meningitidis serogroup C (strain 053442).